An 868-amino-acid chain; its full sequence is DNA mismatch repair protein MutS (868 aa).

An ATP-binding site is contributed by 621–628 (GPNMGGKS). The segment at 803 to 852 (LESGDGGDTGSAQLPLFGPEPVFPPPAQPEPEPDPIREAVENLDPDGLTP) is disordered. The segment covering 823 to 832 (PVFPPPAQPE) has biased composition (pro residues).

This sequence belongs to the DNA mismatch repair MutS family.

Its function is as follows. This protein is involved in the repair of mismatches in DNA. It is possible that it carries out the mismatch recognition step. This protein has a weak ATPase activity. The protein is DNA mismatch repair protein MutS of Halorhodospira halophila (strain DSM 244 / SL1) (Ectothiorhodospira halophila (strain DSM 244 / SL1)).